We begin with the raw amino-acid sequence, 84 residues long: Small ribosomal subunit protein eS27w (84 aa).

The C4-type zinc-finger motif lies at 39-61 (CQGCFNITTVFSHSQTVVVCGNC).

The protein belongs to the eukaryotic ribosomal protein eS27 family. The cofactor is Zn(2+).

This chain is Small ribosomal subunit protein eS27w (RPS27D), found in Arabidopsis thaliana (Mouse-ear cress).